The chain runs to 589 residues: Sulfite reductase [NADPH] hemoprotein beta-component (589 aa).

Residues Cys443, Cys449, Cys488, and Cys492 each contribute to the [4Fe-4S] cluster site. Residue Cys492 participates in siroheme binding.

It belongs to the nitrite and sulfite reductase 4Fe-4S domain family. In terms of assembly, alpha(8)-beta(8). The alpha component is a flavoprotein, the beta component is a hemoprotein. It depends on siroheme as a cofactor. [4Fe-4S] cluster is required as a cofactor.

It carries out the reaction hydrogen sulfide + 3 NADP(+) + 3 H2O = sulfite + 3 NADPH + 4 H(+). It functions in the pathway sulfur metabolism; hydrogen sulfide biosynthesis; hydrogen sulfide from sulfite (NADPH route): step 1/1. Functionally, component of the sulfite reductase complex that catalyzes the 6-electron reduction of sulfite to sulfide. This is one of several activities required for the biosynthesis of L-cysteine from sulfate. The chain is Sulfite reductase [NADPH] hemoprotein beta-component from Neisseria meningitidis serogroup C (strain 053442).